The sequence spans 500 residues: Cytochrome P450 2D28 (500 aa).

C446 provides a ligand contact to heme.

It belongs to the cytochrome P450 family. Heme serves as cofactor.

Its subcellular location is the endoplasmic reticulum membrane. It localises to the microsome membrane. This is Cytochrome P450 2D28 (CYP2D28A) from Mesocricetus auratus (Golden hamster).